We begin with the raw amino-acid sequence, 189 residues long: Sec-independent protein translocase protein TatB (189 aa).

A helical transmembrane segment spans residues 1 to 21; sequence MFGVGIFEVLVILIVAVIALG. The interval 152-189 is disordered; the sequence is TQKPQNSIDSINSKESSVDSLHSPSIVESTQSSSSKDS. A compositionally biased stretch (polar residues) spans 153–189; sequence QKPQNSIDSINSKESSVDSLHSPSIVESTQSSSSKDS.

This sequence belongs to the TatB family. In terms of assembly, the Tat system comprises two distinct complexes: a TatABC complex, containing multiple copies of TatA, TatB and TatC subunits, and a separate TatA complex, containing only TatA subunits. Substrates initially bind to the TatABC complex, which probably triggers association of the separate TatA complex to form the active translocon.

Its subcellular location is the cell inner membrane. In terms of biological role, part of the twin-arginine translocation (Tat) system that transports large folded proteins containing a characteristic twin-arginine motif in their signal peptide across membranes. Together with TatC, TatB is part of a receptor directly interacting with Tat signal peptides. TatB may form an oligomeric binding site that transiently accommodates folded Tat precursor proteins before their translocation. This Helicobacter hepaticus (strain ATCC 51449 / 3B1) protein is Sec-independent protein translocase protein TatB.